A 220-amino-acid chain; its full sequence is MGLFGKTQERPPKDLVNEWSLKIRKEMRVIDRQIRDIQREQEKVKRSIKESAKKGNREACVILAKEVVQSKKAVNKLYASKAHMNSVLMSMKNQLAVLRVSGSLQKSTEVMKAMQNLVKLPEIQATMRELSKEMMKAGIIEEMLEDTFEGMEDQDEMEEQAEMEIDRILFEVTAGALGKAPSKVTDALPEPEITGAMAASDEEEEEDLEAMHSRLAALRS.

Residue Gly2 is the site of N-myristoyl glycine attachment. A coiled-coil region spans residues 22–54 (KIRKEMRVIDRQIRDIQREQEKVKRSIKESAKK). The important for autoinhibitory function stretch occupies residues 168–169 (IL). Positions 181–220 (PSKVTDALPEPEITGAMAASDEEEEEDLEAMHSRLAALRS) are disordered. Positions 201 to 209 (DEEEEEDLE) match the MIT-interacting motif motif. 2 interaction with STAMBP regions span residues 203–207 (EEEED) and 219–220 (RS).

The protein belongs to the SNF7 family. In terms of assembly, probable core component of the endosomal sorting required for transport complex III (ESCRT-III). ESCRT-III components are thought to multimerize to form a flat lattice on the perimeter membrane of the endosome. Several assembly forms of ESCRT-III may exist that interact and act sequentially.

Its subcellular location is the cytoplasm. It localises to the cytosol. The protein resides in the membrane. It is found in the endosome. The protein localises to the late endosome membrane. Functionally, probable core component of the endosomal sorting required for transport complex III (ESCRT-III) which is involved in multivesicular bodies (MVBs) formation and sorting of endosomal cargo proteins into MVBs. MVBs contain intraluminal vesicles (ILVs) that are generated by invagination and scission from the limiting membrane of the endosome and mostly are delivered to lysosomes enabling degradation of membrane proteins, such as stimulated growth factor receptors, lysosomal enzymes and lipids. Involved in late stages of cytokinesis. Plays a role in endosomal sorting/trafficking of EGF receptor. The protein is Charged multivesicular body protein 3 (chmp3) of Xenopus laevis (African clawed frog).